A 369-amino-acid polypeptide reads, in one-letter code: Phospho-N-acetylmuramoyl-pentapeptide-transferase (369 aa).

10 helical membrane-spanning segments follow: residues 2–22, 55–75, 82–102, 120–140, 163–183, 196–216, 240–260, 267–287, 292–312, and 349–369; these read IPLL…TQLF, AVVI…SWWI, PSVS…VGFL, AKLI…INFA, LAFA…NLII, LDGL…LIGI, PLDL…FLWW, IFMG…FAIL, ILLA…ILQV, and ILGG…WVVF.

It belongs to the glycosyltransferase 4 family. MraY subfamily. The cofactor is Mg(2+).

The protein localises to the cell membrane. The enzyme catalyses UDP-N-acetyl-alpha-D-muramoyl-L-alanyl-gamma-D-glutamyl-meso-2,6-diaminopimeloyl-D-alanyl-D-alanine + di-trans,octa-cis-undecaprenyl phosphate = di-trans,octa-cis-undecaprenyl diphospho-N-acetyl-alpha-D-muramoyl-L-alanyl-D-glutamyl-meso-2,6-diaminopimeloyl-D-alanyl-D-alanine + UMP. Its pathway is cell wall biogenesis; peptidoglycan biosynthesis. Its function is as follows. Catalyzes the initial step of the lipid cycle reactions in the biosynthesis of the cell wall peptidoglycan: transfers peptidoglycan precursor phospho-MurNAc-pentapeptide from UDP-MurNAc-pentapeptide onto the lipid carrier undecaprenyl phosphate, yielding undecaprenyl-pyrophosphoryl-MurNAc-pentapeptide, known as lipid I. The sequence is that of Phospho-N-acetylmuramoyl-pentapeptide-transferase from Renibacterium salmoninarum (strain ATCC 33209 / DSM 20767 / JCM 11484 / NBRC 15589 / NCIMB 2235).